We begin with the raw amino-acid sequence, 133 residues long: Putative esterase TV1331 (133 aa).

Belongs to the thioesterase PaaI family.

This chain is Putative esterase TV1331, found in Thermoplasma volcanium (strain ATCC 51530 / DSM 4299 / JCM 9571 / NBRC 15438 / GSS1).